The chain runs to 568 residues: MTLRLSRRAYAEMYGPTTGDRIRLADTELLIEVERDHTLYGEEVKFGGGKVIRDGMGQSQLPAADVADTVITNAVILDHWGIVKADIAIKHGRIAAIGKAGNPDIQPGVTIAIGAATEIIAGEGLIVTAGGIDTHIHFISPQQIDEALASGVTTMIGGGTGPATGTNATTCTPGPWHMERMLQAADGWPINLGFLGKGNASRPQPLVEQIEAGAIGLKLHEDWGTTPAAIDNCLTVADDTDTQVAIHTDTLNEAGFVEATVAAFKGRTIHTYHTEGAGGGHAPDILKVCGEANVLPSSTNPTRPYTINTLDEHLDMLMVCHHLDPSIAEDLAFAESRIRRETIAAEDILHDLGALSMLSSDSQAMGRVGEVIIRTWQTAHKMKVQRGALTGDGARNDNFRAKRYVAKYTINPALTHGIAHEVGSIEPGKWADLVLWEPAFFGVKPAMIIKGGMIAVAQMGDPNASIPTPQPVHYREMFATRGGALARTSLTFVSQLALDAGISARYGLAKRLVPVRGCRTVTKRDMIHNAWQPAIRVDPETYDVVADGALLTCEPAAVLPMAQRYFLF.

The Urease domain maps to 130 to 568 (GGIDTHIHFI…LPMAQRYFLF (439 aa)). The Ni(2+) site is built by histidine 135, histidine 137, and lysine 218. Lysine 218 bears the N6-carboxylysine mark. Residue histidine 220 coordinates substrate. Histidine 247 and histidine 273 together coordinate Ni(2+). Histidine 321 (proton donor) is an active-site residue. Aspartate 361 contacts Ni(2+).

The protein belongs to the metallo-dependent hydrolases superfamily. Urease alpha subunit family. In terms of assembly, heterotrimer of UreA (gamma), UreB (beta) and UreC (alpha) subunits. Three heterotrimers associate to form the active enzyme. It depends on Ni cation as a cofactor. In terms of processing, carboxylation allows a single lysine to coordinate two nickel ions.

The protein localises to the cytoplasm. The catalysed reaction is urea + 2 H2O + H(+) = hydrogencarbonate + 2 NH4(+). It participates in nitrogen metabolism; urea degradation; CO(2) and NH(3) from urea (urease route): step 1/1. This Burkholderia pseudomallei (strain K96243) protein is Urease subunit alpha.